The sequence spans 167 residues: NAD(P)H-quinone oxidoreductase subunit I, chloroplastic (167 aa).

4Fe-4S ferredoxin-type domains lie at 55–84 (GRIHFEFDKCIACEVCVRVCPIDLPVVDWK) and 95–124 (LNYSIDFGICIFCGNCVEYCPTNCLSMTEE). 8 residues coordinate [4Fe-4S] cluster: C64, C67, C70, C74, C104, C107, C110, and C114.

Belongs to the complex I 23 kDa subunit family. In terms of assembly, NDH is composed of at least 16 different subunits, 5 of which are encoded in the nucleus. It depends on [4Fe-4S] cluster as a cofactor.

It localises to the plastid. Its subcellular location is the chloroplast thylakoid membrane. It carries out the reaction a plastoquinone + NADH + (n+1) H(+)(in) = a plastoquinol + NAD(+) + n H(+)(out). It catalyses the reaction a plastoquinone + NADPH + (n+1) H(+)(in) = a plastoquinol + NADP(+) + n H(+)(out). Functionally, NDH shuttles electrons from NAD(P)H:plastoquinone, via FMN and iron-sulfur (Fe-S) centers, to quinones in the photosynthetic chain and possibly in a chloroplast respiratory chain. The immediate electron acceptor for the enzyme in this species is believed to be plastoquinone. Couples the redox reaction to proton translocation, and thus conserves the redox energy in a proton gradient. In Gossypium barbadense (Sea Island cotton), this protein is NAD(P)H-quinone oxidoreductase subunit I, chloroplastic.